Here is a 354-residue protein sequence, read N- to C-terminus: tRNA N6-adenosine threonylcarbamoyltransferase (354 aa).

2 residues coordinate Fe cation: H111 and H115. Residues 134–138, D167, G180, and N279 each bind substrate; that span reads LVSGG. A Fe cation-binding site is contributed by D319.

This sequence belongs to the KAE1 / TsaD family. Requires Fe(2+) as cofactor.

The protein resides in the cytoplasm. The enzyme catalyses L-threonylcarbamoyladenylate + adenosine(37) in tRNA = N(6)-L-threonylcarbamoyladenosine(37) in tRNA + AMP + H(+). Required for the formation of a threonylcarbamoyl group on adenosine at position 37 (t(6)A37) in tRNAs that read codons beginning with adenine. Is involved in the transfer of the threonylcarbamoyl moiety of threonylcarbamoyl-AMP (TC-AMP) to the N6 group of A37, together with TsaE and TsaB. TsaD likely plays a direct catalytic role in this reaction. The sequence is that of tRNA N6-adenosine threonylcarbamoyltransferase from Neisseria gonorrhoeae (strain ATCC 700825 / FA 1090).